A 384-amino-acid polypeptide reads, in one-letter code: Nodal homolog 2-B (384 aa).

Positions 1–18 (MASLGAILLFAIASLMHG) are cleaved as a signal peptide. Positions 19–283 (RPIHSDRKGA…RVADARRHRR (265 aa)) are excised as a propeptide. N-linked (GlcNAc...) asparagine glycans are attached at residues asparagine 71, asparagine 173, and asparagine 344. Residues cysteine 306 and cysteine 372 are joined by a disulfide bond.

The protein belongs to the TGF-beta family. In terms of assembly, homodimer; disulfide-linked. Forms heterodimers with the TGF-beta family member derriere. Interacts with tsku; enhances nodal2 activity.

The protein resides in the secreted. Cooperation and regulatory loops of multiple nodals are essential for mesendoderm patterning in early embryos. Essential for mesoderm formation and axial patterning during embryonic development. Activates the activin-like signaling pathway to induce dorsal and ventral mesoderm in animal cap ectoderm. In addition, also dorsalizes ventral marginal zone (VMZ) tissues during gastrulation. Induces muscle actin. Appears to act as both a short-range and long-range morphogen. The unprocessed protein inhibits bmp- and wnt-signaling. In Xenopus laevis (African clawed frog), this protein is Nodal homolog 2-B (nodal2-b).